Reading from the N-terminus, the 206-residue chain is Translocation protein SEC66 (206 aa).

Over 1-27 the chain is Lumenal; that stretch reads MSEFNETKFSNNGTFFETEEPIVETKS. 2 N-linked (GlcNAc...) asparagine glycosylation sites follow: N5 and N12. Residues 28-48 form a helical; Signal-anchor for type II membrane protein membrane-spanning segment; the sequence is ISVYTPLIYVFILVVSLVMFA. At 49 to 206 the chain is on the cytoplasmic side; the sequence is SSYRKKQAKK…KINNDGRLVN (158 aa).

To S.pombe SpBC409.21. Component of the heterotetrameric Sec62/63complex composed of SEC62, SEC63, SEC66 and SEC72. The Sec62/63 complex associates with the Sec61 complex to form the Sec complex. Part of a complex consisting of KAR2, SEC63, SEC66 and SEC72.

The protein resides in the endoplasmic reticulum membrane. Its function is as follows. Acts as a component of the Sec62/63 complex which is involved in SRP-independent post-translational translocation across the endoplasmic reticulum (ER) and functions together with the Sec61 complex and KAR2 in a channel-forming translocon complex. A cycle of assembly and disassembly of Sec62/63 complex from SEC61 may govern the activity of the translocon. SEC66 is required to attach or retain SEC72 in the SEC63 complex. It is essential for growth at elevated temperatures. The chain is Translocation protein SEC66 (SEC66) from Saccharomyces cerevisiae (strain ATCC 204508 / S288c) (Baker's yeast).